A 24-amino-acid chain; its full sequence is Caerulein precursor fragment B4 (24 aa).

As to expression, expressed by the skin glands.

The protein localises to the secreted. In terms of biological role, has antibacterial and antifungal activity. In Xenopus borealis (Kenyan clawed frog), this protein is Caerulein precursor fragment B4.